The sequence spans 337 residues: NADH-quinone oxidoreductase subunit H (337 aa).

Transmembrane regions (helical) follow at residues Phe-9–Val-29, Phe-77–Phe-97, Leu-110–Ala-130, Met-154–Val-174, Phe-181–Val-201, Met-229–Ala-249, Val-274–Phe-294, and Val-313–Val-333.

The protein belongs to the complex I subunit 1 family. As to quaternary structure, NDH-1 is composed of 14 different subunits. Subunits NuoA, H, J, K, L, M, N constitute the membrane sector of the complex.

It localises to the cell inner membrane. The catalysed reaction is a quinone + NADH + 5 H(+)(in) = a quinol + NAD(+) + 4 H(+)(out). Functionally, NDH-1 shuttles electrons from NADH, via FMN and iron-sulfur (Fe-S) centers, to quinones in the respiratory chain. The immediate electron acceptor for the enzyme in this species is believed to be ubiquinone. Couples the redox reaction to proton translocation (for every two electrons transferred, four hydrogen ions are translocated across the cytoplasmic membrane), and thus conserves the redox energy in a proton gradient. This subunit may bind ubiquinone. This is NADH-quinone oxidoreductase subunit H from Halorhodospira halophila (strain DSM 244 / SL1) (Ectothiorhodospira halophila (strain DSM 244 / SL1)).